The following is a 369-amino-acid chain: Putative FAD-dependent oxidoreductase LodB (369 aa).

Residues 10–14 (GGGPA) and arginine 103 each bind FAD.

It depends on FAD as a cofactor.

It is found in the cytoplasm. Is required for lysine-epsilon oxidase (LOD) activity in M.mediterranea. May be involved in the generation of the quinonic cofactor of LodA, leading to the active form of LodA containing a tyrosine-derived quinone cofactor. The sequence is that of Putative FAD-dependent oxidoreductase LodB (lodB) from Marinomonas mediterranea (strain ATCC 700492 / JCM 21426 / NBRC 103028 / MMB-1).